Here is a 213-residue protein sequence, read N- to C-terminus: Putative tRNA methyltransferase MPN_351 (213 aa).

Belongs to the TrmK family.

Its subcellular location is the cytoplasm. This chain is Putative tRNA methyltransferase MPN_351, found in Mycoplasma pneumoniae (strain ATCC 29342 / M129 / Subtype 1) (Mycoplasmoides pneumoniae).